Reading from the N-terminus, the 312-residue chain is uncharacterized protein (312 aa).

This is an uncharacterized protein from Escherichia coli O157:H7.